We begin with the raw amino-acid sequence, 162 residues long: Cytochrome c-type biogenesis protein CcmE (162 aa).

Topologically, residues 1-8 are cytoplasmic; the sequence is MNPVRKKR. The helical; Signal-anchor for type II membrane protein transmembrane segment at 9 to 29 threads the bilayer; that stretch reads LIIVLAIVVGVGAAVGLALSA. Residues 30 to 162 lie on the Periplasmic side of the membrane; the sequence is LQQNINLFYT…GETSYNQEGK (133 aa). 2 residues coordinate heme: His124 and Tyr128. Residues 139–148 are compositionally biased toward basic and acidic residues; that stretch reads DSGQLKHYEN. The disordered stretch occupies residues 139–162; it reads DSGQLKHYENGKAAGETSYNQEGK.

This sequence belongs to the CcmE/CycJ family.

The protein resides in the cell inner membrane. Heme chaperone required for the biogenesis of c-type cytochromes. Transiently binds heme delivered by CcmC and transfers the heme to apo-cytochromes in a process facilitated by CcmF and CcmH. This is Cytochrome c-type biogenesis protein CcmE from Pseudomonas aeruginosa (strain LESB58).